The following is a 791-amino-acid chain: Protein Rf1, mitochondrial (791 aa).

A mitochondrion-targeting transit peptide spans 1–27 (MARRAASRAVGALRSDGSIQGRGGRAG). The interval 1 to 31 (MARRAASRAVGALRSDGSIQGRGGRAGGSGA) is disordered. The span at 20-30 (QGRGGRAGGSG) shows a compositional bias: gly residues. PPR repeat units lie at residues 86–120 (DLCTYGILIGCCCRAGRLDLGFAALGNVIKKGFRV), 121–156 (DAIAFTPLLKGLCADKRTSDAMDIVLRRMTELGCIP), 157–194 (NVFSYNILLKGLCDENRSQEALELLHMMADDRGGGSPP), 195–229 (DVVSYTTVINGFFKEGDSDKAYSTYHEMLDRGILP), 230–264 (DVVTYNSIIAALCKAQAMDKAMEVLNTMVKNGVMP), 265–299 (DCMTYNSILHGYCSSGQPKEAIGFLKKMRSDGVEP), 300–334 (DVVTYSLLMDYLCKNGRCMEARKIFDSMTKRGLKP), 335–369 (EITTYGTLLQGYATKGALVEMHGLLDLMVRNGIHP), 370–404 (DHYVFSILICAYAKQGKVDQAMLVFSKMRQQGLNP), 405–439 (NAVTYGAVIGILCKSGRVEDAMLYFEQMIDEGLSP), 440–474 (GNIVYNSLIHGLCTCNKWERAEELILEMLDRGICL), 475–509 (NTIFFNSIIDSHCKEGRVIESEKLFELMVRIGVKP), 510–544 (NVITYNTLINGYCLAGKMDEAMKLLSGMVSVGLKP), 545–579 (NTVTYSTLINGYCKISRMEDALVLFKEMESSGVSP), 580–614 (DIITYNIILQGLFQTRRTAAAKELYVRITESGTQI), 615–649 (ELSTYNIILHGLCKNKLTDDALQMFQNLCLMDLKL), 650–684 (EARTFNIMIDALLKVGRNDEAKDLFVAFSSNGLVP), 685–719 (NYWTYRLMAENIIGQGLLEELDQLFLSMEDNGCTV), and 720–754 (DSGMLNFIVRELLQRGEITRAGTYLSMIDEKHFSL).

It localises to the mitochondrion. In terms of biological role, reduces the expression of the cytoplasmic male sterility (CMS)-associated mitochondrial gene ORF79, encoding a cytotoxic peptide. Can restore male fertility by blocking ORF79 production via endonucleolytic cleavage of dicistronic ATP6/ORF79 mRNA. Promotes the editing of ATP6 mRNAs independently of its cleavage function. The sequence is that of Protein Rf1, mitochondrial (Rf1) from Oryza sativa subsp. indica (Rice).